A 277-amino-acid chain; its full sequence is Phosphoenolpyruvate synthase regulatory protein (277 aa).

An ADP-binding site is contributed by 157 to 164; the sequence is GVSRCGKT.

It belongs to the pyruvate, phosphate/water dikinase regulatory protein family. PSRP subfamily.

It catalyses the reaction [pyruvate, water dikinase] + ADP = [pyruvate, water dikinase]-phosphate + AMP + H(+). It carries out the reaction [pyruvate, water dikinase]-phosphate + phosphate + H(+) = [pyruvate, water dikinase] + diphosphate. Functionally, bifunctional serine/threonine kinase and phosphorylase involved in the regulation of the phosphoenolpyruvate synthase (PEPS) by catalyzing its phosphorylation/dephosphorylation. In Escherichia coli O1:K1 / APEC, this protein is Phosphoenolpyruvate synthase regulatory protein.